Consider the following 486-residue polypeptide: Ribosomal RNA small subunit methyltransferase F (486 aa).

Residues 124-130, glutamate 148, aspartate 175, and aspartate 193 contribute to the S-adenosyl-L-methionine site; that span reads ASAPGSK. The active-site Nucleophile is the cysteine 246.

This sequence belongs to the class I-like SAM-binding methyltransferase superfamily. RsmB/NOP family.

It is found in the cytoplasm. It catalyses the reaction cytidine(1407) in 16S rRNA + S-adenosyl-L-methionine = 5-methylcytidine(1407) in 16S rRNA + S-adenosyl-L-homocysteine + H(+). In terms of biological role, specifically methylates the cytosine at position 1407 (m5C1407) of 16S rRNA. The sequence is that of Ribosomal RNA small subunit methyltransferase F from Shewanella putrefaciens (strain CN-32 / ATCC BAA-453).